The following is a 717-amino-acid chain: Ribosomal RNA large subunit methyltransferase K/L (717 aa).

A THUMP domain is found at 43-154; it reads IGYKACLWSR…KGKANITLDL (112 aa).

It belongs to the methyltransferase superfamily. RlmKL family.

The protein resides in the cytoplasm. The enzyme catalyses guanosine(2445) in 23S rRNA + S-adenosyl-L-methionine = N(2)-methylguanosine(2445) in 23S rRNA + S-adenosyl-L-homocysteine + H(+). The catalysed reaction is guanosine(2069) in 23S rRNA + S-adenosyl-L-methionine = N(2)-methylguanosine(2069) in 23S rRNA + S-adenosyl-L-homocysteine + H(+). In terms of biological role, specifically methylates the guanine in position 2445 (m2G2445) and the guanine in position 2069 (m7G2069) of 23S rRNA. The chain is Ribosomal RNA large subunit methyltransferase K/L from Aeromonas hydrophila subsp. hydrophila (strain ATCC 7966 / DSM 30187 / BCRC 13018 / CCUG 14551 / JCM 1027 / KCTC 2358 / NCIMB 9240 / NCTC 8049).